We begin with the raw amino-acid sequence, 104 residues long: Pterin-4-alpha-carbinolamine dehydratase (104 aa).

At Ala2 the chain carries N-acetylalanine. Substrate contacts are provided by residues 61–63 (DHH) and 78–81 (STHD).

This sequence belongs to the pterin-4-alpha-carbinolamine dehydratase family. In terms of assembly, homotetramer and homodimer.

The protein localises to the cytoplasm. The protein resides in the nucleus. It catalyses the reaction (4aS,6R)-4a-hydroxy-L-erythro-5,6,7,8-tetrahydrobiopterin = (6R)-L-erythro-6,7-dihydrobiopterin + H2O. Its function is as follows. Involved in tetrahydrobiopterin biosynthesis. Seems to both prevent the formation of 7-pterins and accelerate the formation of quinonoid-BH2. Coactivator for HNF1A-dependent transcription. Regulates the dimerization of homeodomain protein HNF1A and enhances its transcriptional activity. Also acts as a coactivator for HNF1B-dependent transcription. This Xenopus laevis (African clawed frog) protein is Pterin-4-alpha-carbinolamine dehydratase (pcbd).